Reading from the N-terminus, the 384-residue chain is Putative dioxygenase SSO1533 (384 aa).

Histidine 296, glutamate 302, and histidine 332 together coordinate Fe cation.

Belongs to the homogentisate dioxygenase family. The cofactor is Fe cation.

The protein is Putative dioxygenase SSO1533 of Saccharolobus solfataricus (strain ATCC 35092 / DSM 1617 / JCM 11322 / P2) (Sulfolobus solfataricus).